A 180-amino-acid polypeptide reads, in one-letter code: 6,7-dimethyl-8-ribityllumazine synthase (180 aa).

Residues Phe23, 61-63 (SFE), and 85-87 (AVI) each bind 5-amino-6-(D-ribitylamino)uracil. (2S)-2-hydroxy-3-oxobutyl phosphate is bound at residue 90-91 (QT). His93 acts as the Proton donor in catalysis. A 5-amino-6-(D-ribitylamino)uracil-binding site is contributed by Phe118. Residue Arg132 participates in (2S)-2-hydroxy-3-oxobutyl phosphate binding.

Belongs to the DMRL synthase family.

The enzyme catalyses (2S)-2-hydroxy-3-oxobutyl phosphate + 5-amino-6-(D-ribitylamino)uracil = 6,7-dimethyl-8-(1-D-ribityl)lumazine + phosphate + 2 H2O + H(+). It participates in cofactor biosynthesis; riboflavin biosynthesis; riboflavin from 2-hydroxy-3-oxobutyl phosphate and 5-amino-6-(D-ribitylamino)uracil: step 1/2. Catalyzes the formation of 6,7-dimethyl-8-ribityllumazine by condensation of 5-amino-6-(D-ribitylamino)uracil with 3,4-dihydroxy-2-butanone 4-phosphate. This is the penultimate step in the biosynthesis of riboflavin. In Gloeobacter violaceus (strain ATCC 29082 / PCC 7421), this protein is 6,7-dimethyl-8-ribityllumazine synthase.